A 340-amino-acid polypeptide reads, in one-letter code: PI-PLC X domain-containing protein 2 (340 aa).

The 174-residue stretch at 42–215 (HLHNVPLSNL…KYQVLIFYHC (174 aa)) folds into the PI-PLC X-box domain. Catalysis depends on residues histidine 57 and histidine 132.

Expressed at highest levels in brain, followed by stomach and small intestine. Detected at low levels in kidney, ey, thymus and slkeletal muscle.

The protein resides in the nucleus. It carries out the reaction a 1,2-diacyl-sn-glycero-3-phospho-(1D-myo-inositol) + H2O = 1D-myo-inositol 1-phosphate + a 1,2-diacyl-sn-glycerol + H(+). In terms of biological role, catalyzes the hydrolysis of inositol from phosphatidylinositol (1,2-diacyl-sn-glycero-3-phospho-(1D-myo-inositol), PI). Could also hydrolyze various multi-phosphorylated derivatives of PI, such as phosphatidylinositol-4,5 bisphosphate (PIP2), releasing inositol-1,4,5-trisphosphate (IP3) and the protein kinase C activator diacylglycerol (DAG), therefore mediating cell signaling. The sequence is that of PI-PLC X domain-containing protein 2 (Plcxd2) from Mus musculus (Mouse).